Reading from the N-terminus, the 38-residue chain is Photosystem II reaction center protein L (38 aa).

The chain crosses the membrane as a helical span at residues 17-37 (SLYWGLLLIFVLAVLFSNYFF).

Belongs to the PsbL family. As to quaternary structure, PSII is composed of 1 copy each of membrane proteins PsbA, PsbB, PsbC, PsbD, PsbE, PsbF, PsbH, PsbI, PsbJ, PsbK, PsbL, PsbM, PsbT, PsbX, PsbY, PsbZ, Psb30/Ycf12, at least 3 peripheral proteins of the oxygen-evolving complex and a large number of cofactors. It forms dimeric complexes.

The protein resides in the plastid. It localises to the chloroplast thylakoid membrane. One of the components of the core complex of photosystem II (PSII). PSII is a light-driven water:plastoquinone oxidoreductase that uses light energy to abstract electrons from H(2)O, generating O(2) and a proton gradient subsequently used for ATP formation. It consists of a core antenna complex that captures photons, and an electron transfer chain that converts photonic excitation into a charge separation. This subunit is found at the monomer-monomer interface and is required for correct PSII assembly and/or dimerization. In Angiopteris evecta (Mule's foot fern), this protein is Photosystem II reaction center protein L.